The following is a 482-amino-acid chain: 2-succinylbenzoate--CoA ligase (482 aa).

The protein belongs to the ATP-dependent AMP-binding enzyme family. MenE subfamily.

The catalysed reaction is 2-succinylbenzoate + ATP + CoA = 2-succinylbenzoyl-CoA + AMP + diphosphate. It participates in quinol/quinone metabolism; 1,4-dihydroxy-2-naphthoate biosynthesis; 1,4-dihydroxy-2-naphthoate from chorismate: step 5/7. Its pathway is quinol/quinone metabolism; menaquinone biosynthesis. In terms of biological role, converts 2-succinylbenzoate (OSB) to 2-succinylbenzoyl-CoA (OSB-CoA). This chain is 2-succinylbenzoate--CoA ligase, found in Bacillus anthracis (strain A0248).